A 126-amino-acid chain; its full sequence is Histone H2B type 3-B (126 aa).

Residues 1 to 12 show a composition bias toward low complexity; it reads MPDPSKSAPAPK. A disordered region spans residues 1–35; sequence MPDPSKSAPAPKKGSKKAVTKAQKKDGKKRKRGRK. An N-acetylproline modification is found at Pro-2. Lys-6 carries the N6-(2-hydroxyisobutyryl)lysine; alternate modification. Position 6 is an N6-(beta-hydroxybutyryl)lysine; alternate (Lys-6). Lys-6 is subject to N6-acetyllysine; alternate. Lys-6 is modified (N6-butyryllysine; alternate). Lys-6 is subject to N6-crotonyllysine; alternate. Residue Lys-6 is modified to N6-lactoyllysine; alternate. A Glycyl lysine isopeptide (Lys-Gly) (interchain with G-Cter in SUMO2); alternate cross-link involves residue Lys-6. An ADP-ribosylserine modification is found at Ser-7. Lys-12 carries the post-translational modification N6-(beta-hydroxybutyryl)lysine; alternate. Residues Lys-12 and Lys-13 each carry the N6-acetyllysine; alternate modification. Residues Lys-12 and Lys-13 each carry the N6-crotonyllysine; alternate modification. Residue Lys-12 is modified to N6-lactoyllysine; alternate. Residue Lys-13 is modified to N6-(2-hydroxyisobutyryl)lysine; alternate. Ser-15 bears the Phosphoserine; by STK4/MST1 mark. N6-acetyllysine; alternate is present on residues Lys-16, Lys-17, Lys-21, and Lys-24. N6-crotonyllysine; alternate is present on residues Lys-16, Lys-17, Lys-21, and Lys-24. Residues Lys-16, Lys-17, Lys-21, and Lys-24 each carry the N6-lactoyllysine; alternate modification. N6-(beta-hydroxybutyryl)lysine; alternate is present on residues Lys-17 and Lys-21. An N6-glutaryllysine; alternate modification is found at Lys-17. N6-(2-hydroxyisobutyryl)lysine; alternate is present on residues Lys-21 and Lys-24. At Lys-21 the chain carries N6-butyryllysine; alternate. Lys-21 is covalently cross-linked (Glycyl lysine isopeptide (Lys-Gly) (interchain with G-Cter in SUMO2); alternate). Lys-25 carries the post-translational modification N6-(2-hydroxyisobutyryl)lysine. N6-(2-hydroxyisobutyryl)lysine; alternate is present on Lys-35. Position 35 is an N6-(beta-hydroxybutyryl)lysine; alternate (Lys-35). At Lys-35 the chain carries N6-crotonyllysine; alternate. Lys-35 carries the post-translational modification N6-glutaryllysine; alternate. An N6-succinyllysine; alternate modification is found at Lys-35. A Glycyl lysine isopeptide (Lys-Gly) (interchain with G-Cter in ubiquitin); alternate cross-link involves residue Lys-35. A PolyADP-ribosyl glutamic acid modification is found at Glu-36. Ser-37 carries the phosphoserine; by AMPK modification. Lys-44, Lys-47, and Lys-58 each carry N6-(2-hydroxyisobutyryl)lysine; alternate. Lys-44 carries the N6-lactoyllysine; alternate modification. An N6-glutaryllysine; alternate mark is found at Lys-44 and Lys-47. N6-methyllysine; alternate is present on Lys-47. At Lys-58 the chain carries N6,N6-dimethyllysine; alternate. Position 80 is a dimethylated arginine (Arg-80). N6-(2-hydroxyisobutyryl)lysine; alternate is present on Lys-86. At Lys-86 the chain carries N6-(beta-hydroxybutyryl)lysine; alternate. Position 86 is an N6-acetyllysine; alternate (Lys-86). Residue Lys-86 is modified to N6-lactoyllysine; alternate. Lys-86 is subject to N6,N6,N6-trimethyllysine; alternate. Omega-N-methylarginine is present on residues Arg-87 and Arg-93. An N6-(2-hydroxyisobutyryl)lysine; alternate modification is found at Lys-109. The residue at position 109 (Lys-109) is an N6-lactoyllysine; alternate. Lys-109 is subject to N6-glutaryllysine; alternate. An N6-methyllysine; alternate modification is found at Lys-109. Residue Ser-113 is glycosylated (O-linked (GlcNAc) serine). Thr-116 carries the phosphothreonine modification. N6-(2-hydroxyisobutyryl)lysine; alternate is present on residues Lys-117 and Lys-121. An N6-(beta-hydroxybutyryl)lysine; alternate mark is found at Lys-117 and Lys-121. Residues Lys-117 and Lys-121 each carry the N6-lactoyllysine; alternate modification. An N6-glutaryllysine; alternate mark is found at Lys-117 and Lys-121. N6-succinyllysine; alternate occurs at positions 117 and 121. Lys-117 carries the post-translational modification N6-malonyllysine; alternate. Position 117 is an N6-methylated lysine; alternate (Lys-117). Lys-121 is covalently cross-linked (Glycyl lysine isopeptide (Lys-Gly) (interchain with G-Cter in ubiquitin); alternate).

The protein belongs to the histone H2B family. The nucleosome is a histone octamer containing two molecules each of H2A, H2B, H3 and H4 assembled in one H3-H4 heterotetramer and two H2A-H2B heterodimers. The octamer wraps approximately 147 bp of DNA. Post-translationally, monoubiquitination at Lys-35 (H2BK34Ub) by the MSL1/MSL2 dimer is required for histone H3 'Lys-4' (H3K4me) and 'Lys-79' (H3K79me) methylation and transcription activation at specific gene loci, such as HOXA9 and MEIS1 loci. Similarly, monoubiquitination at Lys-121 (H2BK120Ub) by the RNF20/40 complex gives a specific tag for epigenetic transcriptional activation and is also prerequisite for histone H3 'Lys-4' and 'Lys-79' methylation. It also functions cooperatively with the FACT dimer to stimulate elongation by RNA polymerase II. H2BK120Ub also acts as a regulator of mRNA splicing: deubiquitination by USP49 is required for efficient cotranscriptional splicing of a large set of exons. Phosphorylation at Ser-37 (H2BS36ph) by AMPK in response to stress promotes transcription. Phosphorylated on Ser-15 (H2BS14ph) by STK4/MST1 during apoptosis; which facilitates apoptotic chromatin condensation. Also phosphorylated on Ser-15 in response to DNA double strand breaks (DSBs), and in correlation with somatic hypermutation and immunoglobulin class-switch recombination. In terms of processing, glcNAcylation at Ser-113 promotes monoubiquitination of Lys-121. It fluctuates in response to extracellular glucose, and associates with transcribed genes. Post-translationally, ADP-ribosylated by PARP1 or PARP2 on Ser-7 (H2BS6ADPr) in response to DNA damage. H2BS6ADPr promotes recruitment of CHD1L. Poly ADP-ribosylation on Glu-36 (H2BE35ADPr) by PARP1 regulates adipogenesis: it inhibits phosphorylation at Ser-37 (H2BS36ph), thereby blocking expression of pro-adipogenetic genes. Crotonylation (Kcr) is specifically present in male germ cells and marks testis-specific genes in post-meiotic cells, including X-linked genes that escape sex chromosome inactivation in haploid cells. Crotonylation marks active promoters and enhancers and confers resistance to transcriptional repressors. It is also associated with post-meiotically activated genes on autosomes. In terms of processing, lactylated in macrophages by EP300/P300 by using lactoyl-CoA directly derived from endogenous or exogenous lactate, leading to stimulates gene transcription.

Its subcellular location is the nucleus. The protein localises to the chromosome. Functionally, core component of nucleosome. Nucleosomes wrap and compact DNA into chromatin, limiting DNA accessibility to the cellular machineries which require DNA as a template. Histones thereby play a central role in transcription regulation, DNA repair, DNA replication and chromosomal stability. DNA accessibility is regulated via a complex set of post-translational modifications of histones, also called histone code, and nucleosome remodeling. This is Histone H2B type 3-B from Homo sapiens (Human).